The chain runs to 219 residues: Outer spore wall protein 4 (219 aa).

Residues M1–T19 form the signal peptide. The Extracellular portion of the chain corresponds to N20 to R170. Residues N42, N62, and N136 are each glycosylated (N-linked (GlcNAc...) asparagine). A helical membrane pass occupies residues I171–V191. At A192 to P193 the chain is on the cytoplasmic side. A helical transmembrane segment spans residues F194 to I214. The Extracellular segment spans residues Y215 to Q219.

This sequence belongs to the OSW4/6 family. Post-translationally, N-glycosylated.

Its subcellular location is the membrane. Functionally, involved in spore wall assembly. May be involved in maintaining genome integrity. The polypeptide is Outer spore wall protein 4 (Saccharomyces cerevisiae (strain ATCC 204508 / S288c) (Baker's yeast)).